The sequence spans 130 residues: uncharacterized protein (130 aa).

The chain crosses the membrane as a helical span at residues 8-28; it reads PFILMIIVLGLFLVSIGGYYY.

Its subcellular location is the membrane. This is an uncharacterized protein from Bacillus anthracis.